A 359-amino-acid chain; its full sequence is Putative transposase y4uE (359 aa).

Disordered regions lie at residues 1 to 31 and 318 to 359; these read MGDG…APGG and HYAH…EEAA.

The protein belongs to the transposase 9 family.

In Sinorhizobium fredii (strain NBRC 101917 / NGR234), this protein is Putative transposase y4uE.